The sequence spans 391 residues: Tyrosinase-like protein phomQ2 (391 aa).

Residues 1–21 (MDNVGCEASSSRDPKGKKAVG) are disordered. Residues 61-81 (IRGFICATIIFVVCLGALSYI) form a helical membrane-spanning segment. Residues Asn-97 and Asn-141 are each glycosylated (N-linked (GlcNAc...) asparagine). Positions 160 and 169 each coordinate Cu cation. Residues Asn-204, Asn-246, and Asn-261 are each glycosylated (N-linked (GlcNAc...) asparagine). His-298 and His-324 together coordinate Cu cation. Residue Asn-353 is glycosylated (N-linked (GlcNAc...) asparagine).

The protein belongs to the tyrosinase family. The cofactor is Cu(2+).

The protein resides in the membrane. It participates in mycotoxin biosynthesis. Functionally, tyrosinase-like protein; part of the gene cluster that mediates the biosynthesis of the phomopsins, a group of hexapeptide mycotoxins which infects lupins and causes lupinosis disease in livestock. Within the pathway, phomQ2 is involved in the generation of the common 13-membered macrocycle, possibly by catalyzing the hydroxylation of Tyr. The pathway starts with the processing of the precursor phomA by several endopeptidases including kexin proteases as well as the cluster-specific S41 family peptidase phomP1 and the oligopeptidase phomG to produce 10 identical copies of the hexapeptide Tyr-Val-Ile-Pro-Ile-Asp. After being excised from the precursor peptide, the core peptides are cyclized and modified post-translationally by enzymes encoded within the gene cluster. The timing and order of proteolysis of the phomA precursor and PTMs are still unknown. Two tyrosinase-like enzymes, phomQ1 and phomQ2, catalyze the chlorination and hydroxylation of Tyr, respectively. PhomYb, is proposed to be involved in the construction of the macrocyclic structure. The other 4 ustYa family proteins may be involved in PTMs that generate the unique structure of phomopsin A. PhomYa is required for the hydroxylation of C-beta of Tyr. PhomYc, phomYd, and phomYe are responsible for the biosynthesis of 2,3-dehydroisoleucine (dIle), 2,3-dehydroaspartic acid (dAsp), and 3,4-dehydroproline (dPro), respectively. While dIle formation by phomYc is indispensable for the installation of dAsp by phomYd, the order of the other PTMs have not been elucidated yet. Most of the biosynthetic enzymes likely have broad substrate specificity, and thus, there might be a metabolic grid from a precursor to phomopsin A. The enzyme(s) responsible for the biosynthesis of 3,4-dehydrovaline (dVal) have also not been identified yet. Finally, phomM acts as an S-adenosylmethionine-dependent alpha-N-methyltransferase that catalyzes two successive N-methylation reactions, converting N-desmethyl-phomopsin A to phomopsin A and phomopsin A further to an N,N-dimethylated congener called phomopsin E. The chain is Tyrosinase-like protein phomQ2 from Diaporthe leptostromiformis (Lupinosis disease fungus).